Here is a 166-residue protein sequence, read N- to C-terminus: Ribosome-binding factor A (166 aa).

The interval 122 to 166 is disordered; it reads LASTAEHAGDADPYRVDTEDDDDDTDGADAEARSDADVRRGPQSG. The segment covering 128-138 has biased composition (basic and acidic residues); sequence HAGDADPYRVD. Acidic residues predominate over residues 139–150; sequence TEDDDDDTDGAD. Positions 151–166 are enriched in basic and acidic residues; sequence AEARSDADVRRGPQSG.

Belongs to the RbfA family. Monomer. Binds 30S ribosomal subunits, but not 50S ribosomal subunits or 70S ribosomes.

Its subcellular location is the cytoplasm. Functionally, one of several proteins that assist in the late maturation steps of the functional core of the 30S ribosomal subunit. Associates with free 30S ribosomal subunits (but not with 30S subunits that are part of 70S ribosomes or polysomes). Required for efficient processing of 16S rRNA. May interact with the 5'-terminal helix region of 16S rRNA. The polypeptide is Ribosome-binding factor A (Saccharopolyspora erythraea (strain ATCC 11635 / DSM 40517 / JCM 4748 / NBRC 13426 / NCIMB 8594 / NRRL 2338)).